A 430-amino-acid chain; its full sequence is GPI mannosyltransferase 1 (430 aa).

Residues 1 to 11 (MELQSLIDTVS) are Cytoplasmic-facing. Residues 12-32 (LQKLLLLGALLRLILIAYAFF) form a helical membrane-spanning segment. Residues 33 to 72 (HDQWFRVKYTDIDYMIVVDGARHMWNGGSPFDRTTFRYTP) are Lumenal-facing. A helical transmembrane segment spans residues 73 to 93 (LLAALVMPSIWIANPMGKLIF). The Cytoplasmic portion of the chain corresponds to 94-115 (ASSDLGAAWYCYGVLKSFAKER). The chain crosses the membrane as a helical span at residues 116–136 (SAKWMVSLFILFNPIVLSVST). Residues 137-163 (RGNSDMLVTFMSLMVLSKFARRKCYQA) are Lumenal-facing. A helical transmembrane segment spans residues 164–184 (AAVLGFAVHFKIYPIIYALPL). The Cytoplasmic segment spans residues 185–206 (TLGVWEQSVAASTNTWRRVVKT). The helical transmembrane segment at 207-227 (AVVVSICALMAAISFAVPTVL) threads the bilayer. Over 228-360 (CYMKYGQQYL…AFKFFSWVKA (133 aa)) the chain is Lumenal. The chain crosses the membrane as a helical span at residues 361–381 (LGVVLMWAATIPLWVTTAVPL). Over 382–388 (EFHGYSD) the chain is Cytoplasmic. A helical membrane pass occupies residues 389-409 (FAQLWIVSCLFFLAMVVLASM). The Lumenal portion of the chain corresponds to 410-430 (LARIAYRVQCTKCSAKSIKVA).

This sequence belongs to the PIGM family.

Its subcellular location is the endoplasmic reticulum membrane. It functions in the pathway glycolipid biosynthesis; glycosylphosphatidylinositol-anchor biosynthesis. In terms of biological role, mannosyltransferase involved in glycosylphosphatidylinositol-anchor biosynthesis. Transfers the first alpha-1,4-mannose to GlcN-PI during GPI precursor assembly. The sequence is that of GPI mannosyltransferase 1 (PIGM) from Trypanosoma brucei brucei (strain 927/4 GUTat10.1).